The primary structure comprises 637 residues: Nuclear receptor-binding protein homolog (637 aa).

Over residues 1 to 14 the composition is skewed to polar residues; the sequence is MSNSQANAGISGST. 2 disordered regions span residues 1–60 and 74–99; these read MSNS…TADA and SEGVNLDSSPRESGDDSEDESEILEE. The segment covering 36–46 has biased composition (low complexity); it reads PAATPPSQSTQ. The segment covering 88-98 has biased composition (acidic residues); that stretch reads DDSEDESEILE. One can recognise a Protein kinase domain in the interval 109–375; sequence REEVDQRDVP…ANDLLFHPLL (267 aa). Disordered stretches follow at residues 465–489 and 617–637; these read PNFRSRAASPERADSVKSATPEPVD and PQEQQNADGDVDVEHSGTTSN. Serine 473, serine 479, and serine 482 each carry phosphoserine. Threonine 484 is subject to Phosphothreonine.

This sequence belongs to the protein kinase superfamily. Ser/Thr protein kinase family.

It is found in the cytoplasm. Its subcellular location is the cell cortex. Its function is as follows. May play a role in subcellular trafficking between the endoplasmic reticulum and Golgi apparatus. The protein is Nuclear receptor-binding protein homolog of Drosophila melanogaster (Fruit fly).